Here is a 248-residue protein sequence, read N- to C-terminus: 2,3-bisphosphoglycerate-dependent phosphoglycerate mutase (248 aa).

Residues 8–15 (RHGESAWN), 21–22 (TG), arginine 60, 87–90 (EKHY), lysine 98, 114–115 (RR), and 183–184 (GN) each bind substrate. Histidine 9 functions as the Tele-phosphohistidine intermediate in the catalytic mechanism. Residue glutamate 87 is the Proton donor/acceptor of the active site.

This sequence belongs to the phosphoglycerate mutase family. BPG-dependent PGAM subfamily.

It carries out the reaction (2R)-2-phosphoglycerate = (2R)-3-phosphoglycerate. It functions in the pathway carbohydrate degradation; glycolysis; pyruvate from D-glyceraldehyde 3-phosphate: step 3/5. Functionally, catalyzes the interconversion of 2-phosphoglycerate and 3-phosphoglycerate. The protein is 2,3-bisphosphoglycerate-dependent phosphoglycerate mutase of Bacteroides fragilis (strain ATCC 25285 / DSM 2151 / CCUG 4856 / JCM 11019 / LMG 10263 / NCTC 9343 / Onslow / VPI 2553 / EN-2).